Consider the following 168-residue polypeptide: Lipoprotein signal peptidase (168 aa).

4 helical membrane-spanning segments follow: residues 15–35 (WLWLAILVFIADIGIKLVVMD), 47–67 (VLPFFNLLYVHNYGAAFSFLS), 75–95 (WLFTGIAFVVTGLLTYWMSKL), and 107–127 (ALIIGGAVGNVFDRVVHGFVV). Catalysis depends on residues D128 and D146. A helical membrane pass occupies residues 141 to 161 (AFNLADTTICIGAAMIILDGF).

It belongs to the peptidase A8 family.

It is found in the cell inner membrane. It carries out the reaction Release of signal peptides from bacterial membrane prolipoproteins. Hydrolyzes -Xaa-Yaa-Zaa-|-(S,diacylglyceryl)Cys-, in which Xaa is hydrophobic (preferably Leu), and Yaa (Ala or Ser) and Zaa (Gly or Ala) have small, neutral side chains.. The protein operates within protein modification; lipoprotein biosynthesis (signal peptide cleavage). Functionally, this protein specifically catalyzes the removal of signal peptides from prolipoproteins. This is Lipoprotein signal peptidase from Vibrio campbellii (strain ATCC BAA-1116).